The sequence spans 776 residues: V-set and immunoglobulin domain-containing protein 10-like 2 (776 aa).

The N-terminal stretch at 1 to 28 (MVGLSAHHRPLGCRLLILFCLLHPGASG) is a signal peptide. 5 consecutive Ig-like domains span residues 32 to 140 (PTSN…LYLM), 150 to 234 (PRVQ…AFLD), 242 to 324 (PVIT…TTVQ), 399 to 498 (PTLA…LRLE), and 500 to 592 (PQLT…VLLE). 5 disulfides stabilise this stretch: Cys-56-Cys-122, Cys-169-Cys-217, Cys-268-Cys-308, Cys-435-Cys-480, and Cys-521-Cys-576. The Fibronectin type-III domain maps to 608 to 708 (TPPNVTISRL…EVKTPVDPAF (101 aa)). N-linked (GlcNAc...) asparagine glycosylation is found at Asn-611 and Asn-637. The chain crosses the membrane as a helical span at residues 713–733 (AVLGAAGTGVVVALATSLLVF).

The protein resides in the membrane. The sequence is that of V-set and immunoglobulin domain-containing protein 10-like 2 from Mus musculus (Mouse).